The following is a 245-amino-acid chain: Ribosomal RNA small subunit methyltransferase G (245 aa).

S-adenosyl-L-methionine-binding positions include G85, F90, 108–110 (DST), 136–137 (AE), and R155.

Belongs to the methyltransferase superfamily. RNA methyltransferase RsmG family.

It localises to the cytoplasm. Specifically methylates the N7 position of a guanine in 16S rRNA. The sequence is that of Ribosomal RNA small subunit methyltransferase G from Trichormus variabilis (strain ATCC 29413 / PCC 7937) (Anabaena variabilis).